Reading from the N-terminus, the 66-residue chain is Large ribosomal subunit protein bL33c (66 aa).

This sequence belongs to the bacterial ribosomal protein bL33 family.

It localises to the plastid. The protein localises to the chloroplast. The protein is Large ribosomal subunit protein bL33c of Platanus occidentalis (Sycamore).